The following is a 338-amino-acid chain: Heat-inducible transcription repressor HrcA (338 aa).

The protein belongs to the HrcA family.

Negative regulator of class I heat shock genes (grpE-dnaK-dnaJ and groELS operons). Prevents heat-shock induction of these operons. The sequence is that of Heat-inducible transcription repressor HrcA from Bacillus cereus (strain 03BB102).